The sequence spans 320 residues: o-succinylbenzoate synthase (320 aa).

Lysine 133 functions as the Proton donor in the catalytic mechanism. 3 residues coordinate Mg(2+): aspartate 161, glutamate 190, and aspartate 213. The active-site Proton acceptor is the lysine 235.

It belongs to the mandelate racemase/muconate lactonizing enzyme family. MenC type 1 subfamily. A divalent metal cation is required as a cofactor.

It catalyses the reaction (1R,6R)-6-hydroxy-2-succinyl-cyclohexa-2,4-diene-1-carboxylate = 2-succinylbenzoate + H2O. It participates in quinol/quinone metabolism; 1,4-dihydroxy-2-naphthoate biosynthesis; 1,4-dihydroxy-2-naphthoate from chorismate: step 4/7. It functions in the pathway quinol/quinone metabolism; menaquinone biosynthesis. Functionally, converts 2-succinyl-6-hydroxy-2,4-cyclohexadiene-1-carboxylate (SHCHC) to 2-succinylbenzoate (OSB). The chain is o-succinylbenzoate synthase from Salmonella agona (strain SL483).